Here is a 219-residue protein sequence, read N- to C-terminus: Swarming motility regulation protein RssB (219 aa).

One can recognise a Response regulatory domain in the interval 2-116 (NILLVEDDLQ…ELISRVKAVN (115 aa)). At aspartate 51 the chain carries 4-aspartylphosphate. The ompR/PhoB-type DNA-binding region spans 124–218 (SQTWSLGALY…VRGIGYLLKK (95 aa)).

Its subcellular location is the cytoplasm. Member of the two-component regulatory system RssA/RssB involved in regulation of swarming motility which has been shown to be inhibited by saturated fatty acids. RssA/RssB regulates cellular fatty acid composition, hemolysin production and cell surface topography. RssA/RssB negatively regulates the activity of SlhBA. It can also act as a negative regulator for the control of the swarming initiation. RssB binds its own promoter. The protein is Swarming motility regulation protein RssB (rssB) of Serratia marcescens.